Here is a 131-residue protein sequence, read N- to C-terminus: DNA-directed RNA polymerase subunit omega (131 aa).

Residues 78 to 131 are disordered; sequence DEPEAEAVPALSSAPDAAQSDAMGDVQFDRMTEEDLLRGLEGLVPPAATDDDGE. Basic and acidic residues predominate over residues 104 to 115; the sequence is QFDRMTEEDLLR.

It belongs to the RNA polymerase subunit omega family. The RNAP catalytic core consists of 2 alpha, 1 beta, 1 beta' and 1 omega subunit. When a sigma factor is associated with the core the holoenzyme is formed, which can initiate transcription.

It catalyses the reaction RNA(n) + a ribonucleoside 5'-triphosphate = RNA(n+1) + diphosphate. Its function is as follows. Promotes RNA polymerase assembly. Latches the N- and C-terminal regions of the beta' subunit thereby facilitating its interaction with the beta and alpha subunits. The polypeptide is DNA-directed RNA polymerase subunit omega (Beijerinckia indica subsp. indica (strain ATCC 9039 / DSM 1715 / NCIMB 8712)).